Here is a 517-residue protein sequence, read N- to C-terminus: Crotonobetaine/carnitine--CoA ligase (517 aa).

It belongs to the ATP-dependent AMP-binding enzyme family.

The enzyme catalyses 4-(trimethylamino)butanoate + ATP + CoA = 4-(trimethylamino)butanoyl-CoA + AMP + diphosphate. It catalyses the reaction crotonobetaine + ATP + CoA = crotonobetainyl-CoA + AMP + diphosphate. It carries out the reaction (R)-carnitine + ATP + CoA = (R)-carnitinyl-CoA + AMP + diphosphate. The protein operates within amine and polyamine metabolism; carnitine metabolism. Catalyzes the transfer of CoA to carnitine, generating the initial carnitinyl-CoA needed for the CaiB reaction cycle. Also has activity toward crotonobetaine and gamma-butyrobetaine. The sequence is that of Crotonobetaine/carnitine--CoA ligase from Salmonella paratyphi A (strain ATCC 9150 / SARB42).